Reading from the N-terminus, the 461-residue chain is Coronin-1A (461 aa).

Ser2 carries the post-translational modification N-acetylserine. Ser2 is subject to Phosphoserine; by PKC. WD repeat units lie at residues 13 to 63 (HVFG…LVLP), 73 to 110 (NAPT…MVWE), 123 to 160 (PVVT…MVWD), 164 to 204 (GAAM…RIIE), 207 to 251 (KGTV…ALWD), 258 to 296 (PLSL…RYFE), and 302 to 349 (PFLH…EPIA). A compositionally biased stretch (basic and acidic residues) spans 403–418 (ELRVNRGLDTGRRRAA). A disordered region spans residues 403–432 (ELRVNRGLDTGRRRAAPEASGTPSSDAVSR). Position 412 is a phosphothreonine; by PKC (Thr412). Phosphoserine is present on Ser422. Residues 424–460 (TPSSDAVSRLEEEMRKLQATVQELQKRLDRLEETVQA) are a coiled coil. Lys449 bears the N6-acetyllysine mark.

The protein belongs to the WD repeat coronin family. Binds actin. Post-translationally, phosphorylation at Thr-412 by PKC strongly down-regulates the association with actin. Polyubiquitinated by RNF128 with 'Lys-48'-linked chains, leading to proteasomal degradation. In terms of tissue distribution, expressed in brain, thymus, spleen, bone marrow and lymph node. Low in lung and gut.

It is found in the cytoplasm. The protein resides in the cytoskeleton. It localises to the cell cortex. Its subcellular location is the cytoplasmic vesicle. The protein localises to the phagosome membrane. Functionally, may be a crucial component of the cytoskeleton of highly motile cells, functioning both in the invagination of large pieces of plasma membrane, as well as in forming protrusions of the plasma membrane involved in cell locomotion. In mycobacteria-infected cells, its retention on the phagosomal membrane prevents fusion between phagosomes and lysosomes. The protein is Coronin-1A (CORO1A) of Homo sapiens (Human).